Reading from the N-terminus, the 496-residue chain is Pseudooxynicotine dehydrogenase (496 aa).

A signal peptide (tat-type signal) is located at residues 1–42 (MTKDGDEGSKSGVSRRKFLGSAAVGVATAGIASQLLTLSAPA). Positions 69, 88, 96, 113, 285, 461, and 471 each coordinate FAD.

It belongs to the flavin monoamine oxidase family. In terms of assembly, homodimer. It depends on FAD as a cofactor. In terms of processing, predicted to be exported by the Tat system. The position of the signal peptide cleavage has not been experimentally proven.

The protein localises to the periplasm. It catalyses the reaction pseudooxynicotine + 2 Fe(III)-[cytochrome c] + H2O = 4-oxo-4-(pyridin-3-yl)butanal + methylamine + 2 Fe(II)-[cytochrome c] + 2 H(+). The protein operates within alkaloid degradation; nicotine degradation. Strongly inhibited by Na(2)MoO(4) and FeCl(3). Activity is nearly twice as high in the presence of Na(2)WO(4). Involved in nicotine degradation. Catalyzes the deamination of pseudooxynicotine to 3-succinoylsemialdehyde-pyridine. Functions as a dehydrogenase that uses the c-type cytochrome protein CycN as the physiological electron acceptor. O(2) is a poor electron acceptor. Pnao is oxidized by CycN 230 times faster than O(2) at equivalent oxidant concentrations. The sequence is that of Pseudooxynicotine dehydrogenase from Pseudomonas putida (strain DSM 28022 / S16).